We begin with the raw amino-acid sequence, 861 residues long: Probable beta-glucosidase A (861 aa).

Positions 1–19 (MKLGWIEVAALAAASVVSA) are cleaved as a signal peptide. 3 N-linked (GlcNAc...) asparagine glycosylation sites follow: Asn-62, Asn-212, and Asn-253. Asp-281 is a catalytic residue. 10 N-linked (GlcNAc...) asparagine glycosylation sites follow: Asn-316, Asn-323, Asn-355, Asn-443, Asn-524, Asn-543, Asn-565, Asn-669, Asn-713, and Asn-846.

The protein belongs to the glycosyl hydrolase 3 family.

It is found in the secreted. It catalyses the reaction Hydrolysis of terminal, non-reducing beta-D-glucosyl residues with release of beta-D-glucose.. Its pathway is glycan metabolism; cellulose degradation. In terms of biological role, beta-glucosidases are one of a number of cellulolytic enzymes involved in the degradation of cellulosic biomass. Catalyzes the last step releasing glucose from the inhibitory cellobiose. This chain is Probable beta-glucosidase A (bglA), found in Aspergillus flavus (strain ATCC 200026 / FGSC A1120 / IAM 13836 / NRRL 3357 / JCM 12722 / SRRC 167).